The sequence spans 319 residues: CD2 antigen cytoplasmic tail-binding protein 2 homolog (319 aa).

Disordered regions lie at residues 1-57 and 105-124; these read MASK…EDDV and NAFD…KNEP. The span at 12-24 shows a compositional bias: basic and acidic residues; it reads KVKEESFKKHTLD. Phosphoserine is present on residues Ser-25 and Ser-30. Residues 25–47 show a composition bias toward acidic residues; it reads SDEEDSDDYEREYLNDSDIEGGE. Tyr-37 bears the Phosphotyrosine mark. Position 41 is a phosphoserine (Ser-41). Over residues 109–124 the composition is skewed to basic and acidic residues; sequence PAKDEENSSDEEKNEP. Residues 260 to 316 enclose the GYF domain; that stretch reads EVTWEFKWSQDETDIQGPFSTEKMLKWSQENYFKNGVYVRKCGENTNFYTSNRIDFD.

It is found in the nucleus. In terms of biological role, required for embryonic epithelial tissue repair, but not for the assembly of the actomyosin cable at the wound edge. Probably acts downstream of rl in the regulation of Ddc and msn transcription to promote wound healing. In Drosophila melanogaster (Fruit fly), this protein is CD2 antigen cytoplasmic tail-binding protein 2 homolog (holn1).